Here is a 60-residue protein sequence, read N- to C-terminus: Large ribosomal subunit protein uL30 (60 aa).

It belongs to the universal ribosomal protein uL30 family. In terms of assembly, part of the 50S ribosomal subunit.

This Paracidovorax citrulli (strain AAC00-1) (Acidovorax citrulli) protein is Large ribosomal subunit protein uL30.